Consider the following 555-residue polypeptide: CTP synthase (555 aa).

Residues 1–267 (MAKFVFVTGG…CKEVLDCLDL (267 aa)) are amidoligase domain. Ser13 provides a ligand contact to CTP. UTP is bound at residue Ser13. Residues 14–19 (SIGKGI) and Asp71 each bind ATP. Mg(2+)-binding residues include Asp71 and Glu141. CTP-binding positions include 148–150 (DIE), 188–193 (KTKPTQ), and Lys224. Residues 188–193 (KTKPTQ) and Lys224 contribute to the UTP site. Residues 292–534 (KVALVGKYVQ…IQAAQIRVPS (243 aa)) enclose the Glutamine amidotransferase type-1 domain. Gly354 is a binding site for L-glutamine. Cys381 functions as the Nucleophile; for glutamine hydrolysis in the catalytic mechanism. Residues 382 to 385 (LGMQ), Glu405, and Arg462 contribute to the L-glutamine site. Residues His507 and Glu509 contribute to the active site. The interval 536-555 (PSEAFNPQSKIIEKKSLEQQ) is disordered. The segment covering 546-555 (IIEKKSLEQQ) has biased composition (basic and acidic residues).

This sequence belongs to the CTP synthase family. Homotetramer.

It catalyses the reaction UTP + L-glutamine + ATP + H2O = CTP + L-glutamate + ADP + phosphate + 2 H(+). The enzyme catalyses L-glutamine + H2O = L-glutamate + NH4(+). The catalysed reaction is UTP + NH4(+) + ATP = CTP + ADP + phosphate + 2 H(+). Its pathway is pyrimidine metabolism; CTP biosynthesis via de novo pathway; CTP from UDP: step 2/2. Allosterically activated by GTP, when glutamine is the substrate; GTP has no effect on the reaction when ammonia is the substrate. The allosteric effector GTP functions by stabilizing the protein conformation that binds the tetrahedral intermediate(s) formed during glutamine hydrolysis. Inhibited by the product CTP, via allosteric rather than competitive inhibition. In terms of biological role, catalyzes the ATP-dependent amination of UTP to CTP with either L-glutamine or ammonia as the source of nitrogen. Regulates intracellular CTP levels through interactions with the four ribonucleotide triphosphates. The chain is CTP synthase from Prochlorococcus marinus (strain NATL1A).